The primary structure comprises 287 residues: Pyridoxal 5'-phosphate synthase subunit PdxS (287 aa).

Position 21 (Asp-21) interacts with D-ribose 5-phosphate. Lys-78 acts as the Schiff-base intermediate with D-ribose 5-phosphate in catalysis. Gly-150 contributes to the D-ribose 5-phosphate binding site. Arg-162 lines the D-glyceraldehyde 3-phosphate pocket. Residues Gly-211 and 232 to 233 (GS) contribute to the D-ribose 5-phosphate site.

Belongs to the PdxS/SNZ family. In terms of assembly, in the presence of PdxT, forms a dodecamer of heterodimers.

It catalyses the reaction aldehydo-D-ribose 5-phosphate + D-glyceraldehyde 3-phosphate + L-glutamine = pyridoxal 5'-phosphate + L-glutamate + phosphate + 3 H2O + H(+). The protein operates within cofactor biosynthesis; pyridoxal 5'-phosphate biosynthesis. Functionally, catalyzes the formation of pyridoxal 5'-phosphate from ribose 5-phosphate (RBP), glyceraldehyde 3-phosphate (G3P) and ammonia. The ammonia is provided by the PdxT subunit. Can also use ribulose 5-phosphate and dihydroxyacetone phosphate as substrates, resulting from enzyme-catalyzed isomerization of RBP and G3P, respectively. The polypeptide is Pyridoxal 5'-phosphate synthase subunit PdxS (Tropheryma whipplei (strain Twist) (Whipple's bacillus)).